The primary structure comprises 328 residues: DNA-directed RNA polymerase subunit alpha (328 aa).

Residues M1–Q234 are alpha N-terminal domain (alpha-NTD). The segment at I248–P328 is alpha C-terminal domain (alpha-CTD).

Belongs to the RNA polymerase alpha chain family. As to quaternary structure, homodimer. The RNAP catalytic core consists of 2 alpha, 1 beta, 1 beta' and 1 omega subunit. When a sigma factor is associated with the core the holoenzyme is formed, which can initiate transcription.

The catalysed reaction is RNA(n) + a ribonucleoside 5'-triphosphate = RNA(n+1) + diphosphate. Its function is as follows. DNA-dependent RNA polymerase catalyzes the transcription of DNA into RNA using the four ribonucleoside triphosphates as substrates. The chain is DNA-directed RNA polymerase subunit alpha from Neisseria meningitidis serogroup A / serotype 4A (strain DSM 15465 / Z2491).